The following is a 398-amino-acid chain: MNIHEYQAKALLKSYGAPVAEGVAIFSADEAAAAAKKLPGPLYVVKSQIHAGGRGKGKFKELGADAKGGVRLAKSADEVVAHAREMLGNTLVTKQTGPSGKQVNRLYIEDGADIDRELYLSILVDRSVGQVAFVVSTEGGMDIEAVAEHTPEKIVTVAIDPDKGVTADDLKTLTEALKLDGEARADAEKLFPILYKAFVEKDMSLLEVNPLIVMTNGRMRVLDAKVSFDGNALFRHEDVVALRDTTEEDEKEIEASKYDLAYVALDGNIGCMVNGAGLAMATMDIIKLYGAEPANFLDVGGGASKEKVTQAFKIITADPAVKGILVNIFGGIMKCDVIAEGVIAAVKEVGLKVPLVVRLEGTNVELGKKIINESGLNVISADDLDDAAQKIVAAVKGA.

An ATP-grasp domain is found at 9–254 (KALLKSYGAP…TTEEDEKEIE (246 aa)). ATP-binding positions include lysine 46, 53–55 (GRG), glutamate 109, alanine 112, and glutamate 117. 2 residues coordinate Mg(2+): asparagine 209 and aspartate 223. Residues asparagine 274 and 331-333 (GIM) each bind substrate.

It belongs to the succinate/malate CoA ligase beta subunit family. In terms of assembly, heterotetramer of two alpha and two beta subunits. The cofactor is Mg(2+).

The catalysed reaction is succinate + ATP + CoA = succinyl-CoA + ADP + phosphate. It carries out the reaction GTP + succinate + CoA = succinyl-CoA + GDP + phosphate. Its pathway is carbohydrate metabolism; tricarboxylic acid cycle; succinate from succinyl-CoA (ligase route): step 1/1. Succinyl-CoA synthetase functions in the citric acid cycle (TCA), coupling the hydrolysis of succinyl-CoA to the synthesis of either ATP or GTP and thus represents the only step of substrate-level phosphorylation in the TCA. The beta subunit provides nucleotide specificity of the enzyme and binds the substrate succinate, while the binding sites for coenzyme A and phosphate are found in the alpha subunit. In Sinorhizobium medicae (strain WSM419) (Ensifer medicae), this protein is Succinate--CoA ligase [ADP-forming] subunit beta.